The sequence spans 602 residues: Elongation factor 4 (602 aa).

Residues 6–188 (DHIRNFSIVA…AIVTQLPAPK (183 aa)) enclose the tr-type G domain. GTP contacts are provided by residues 18–23 (DHGKST) and 135–138 (NKID).

The protein belongs to the TRAFAC class translation factor GTPase superfamily. Classic translation factor GTPase family. LepA subfamily.

Its subcellular location is the cell inner membrane. It catalyses the reaction GTP + H2O = GDP + phosphate + H(+). Required for accurate and efficient protein synthesis under certain stress conditions. May act as a fidelity factor of the translation reaction, by catalyzing a one-codon backward translocation of tRNAs on improperly translocated ribosomes. Back-translocation proceeds from a post-translocation (POST) complex to a pre-translocation (PRE) complex, thus giving elongation factor G a second chance to translocate the tRNAs correctly. Binds to ribosomes in a GTP-dependent manner. This chain is Elongation factor 4, found in Brucella anthropi (strain ATCC 49188 / DSM 6882 / CCUG 24695 / JCM 21032 / LMG 3331 / NBRC 15819 / NCTC 12168 / Alc 37) (Ochrobactrum anthropi).